The primary structure comprises 115 residues: Putative UPF0377 protein YHL045W (115 aa).

Residues 10-30 (ACIFIDSVCEGIVFWGLCLFV) traverse the membrane as a helical segment.

The protein belongs to the UPF0377 family.

The protein localises to the membrane. This chain is Putative UPF0377 protein YHL045W, found in Saccharomyces cerevisiae (strain ATCC 204508 / S288c) (Baker's yeast).